The sequence spans 166 residues: MISVATLECFTHGKIGIKIHKMACGYKELQNDFGYDIIRGNVLVTASMFLPSKESIESLLNMKLPKSDHEFKYSKAYNEENDLKVAEYISKALKEKLKCNIAISTTAGVGKGAISILTDKNSYLFTSDIYGNLIKGENILKRQENAVNKAFEAFIKILNEEYNIKE.

The protein belongs to the UPF0254 family.

This Methanococcus vannielii (strain ATCC 35089 / DSM 1224 / JCM 13029 / OCM 148 / SB) protein is UPF0254 protein Mevan_0254.